We begin with the raw amino-acid sequence, 91 residues long: Acylphosphatase (91 aa).

The Acylphosphatase-like domain maps to 3 to 91 (TVTMKVTGLV…EKFTRFSVVY (89 aa)). Catalysis depends on residues arginine 18 and asparagine 36.

Belongs to the acylphosphatase family.

The catalysed reaction is an acyl phosphate + H2O = a carboxylate + phosphate + H(+). The polypeptide is Acylphosphatase (acyP) (Lactobacillus gasseri (strain ATCC 33323 / DSM 20243 / BCRC 14619 / CIP 102991 / JCM 1131 / KCTC 3163 / NCIMB 11718 / NCTC 13722 / AM63)).